Reading from the N-terminus, the 441-residue chain is NADH-quinone oxidoreductase subunit D 1 (441 aa).

This sequence belongs to the complex I 49 kDa subunit family. NDH-1 is composed of 14 different subunits. Subunits NuoB, C, D, E, F, and G constitute the peripheral sector of the complex.

It is found in the cell membrane. The enzyme catalyses a quinone + NADH + 5 H(+)(in) = a quinol + NAD(+) + 4 H(+)(out). Its function is as follows. NDH-1 shuttles electrons from NADH, via FMN and iron-sulfur (Fe-S) centers, to quinones in the respiratory chain. The immediate electron acceptor for the enzyme in this species is believed to be a menaquinone. Couples the redox reaction to proton translocation (for every two electrons transferred, four hydrogen ions are translocated across the cytoplasmic membrane), and thus conserves the redox energy in a proton gradient. This chain is NADH-quinone oxidoreductase subunit D 1, found in Salinispora tropica (strain ATCC BAA-916 / DSM 44818 / JCM 13857 / NBRC 105044 / CNB-440).